The sequence spans 203 residues: Cutinase pbc1 (203 aa).

An N-terminal signal peptide occupies residues 1-18; it reads MKVTALGNTLTGFGQALA. C32 and C107 form a disulfide bridge. S118 (nucleophile) is an active-site residue. C166 and C173 form a disulfide bridge. Residue H170 is part of the active site. Residue H183 is the Proton donor/acceptor of the active site.

The protein belongs to the cutinase family. Post-translationally, the 2 disulfide bonds play a critical role in holding the catalytic residues in juxta-position; reduction of the disulfide bridges results in the complete inactivation of the enzyme.

The protein localises to the secreted. The enzyme catalyses cutin + H2O = cutin monomers.. Catalyzes the hydrolysis of complex carboxylic polyesters found in the cell wall of plants. Degrades cutin, a macromolecule that forms the structure of the plant cuticle. Allows pathogenic fungi to penetrate through the cuticular barrier into the host plant during the initial stage of fungal infection. The sequence is that of Cutinase pbc1 from Pyrenopeziza brassicae.